The sequence spans 294 residues: MSDILTRVISENGKTFGIACDTTALVNEACRKHDVGPLAAVALGRALTGSILMGALLKGDQYLQLKFEGNGPLGKIITEASPDGWCRGYIANPHAELPLLNGRLDVAGGVGHAGLLSVTKDIGMKQKYQGTSHLVSSEIGEDIAYYLTTSEQVPSAVGLGIQLNPNGTIDAAGGFLIQSLPPADEELIASMEEVIANLPSISSMILDGQSPRQMLDKLFGAIPHKETGNSKLKYQCSCSREKMENALISLGAADLASLLTERGEAEVLCEFCRQNYHFAGKDLQEIIDRLKNIQ.

2 disulfides stabilise this stretch: Cys-236-Cys-238 and Cys-269-Cys-272.

This sequence belongs to the HSP33 family. In terms of processing, under oxidizing conditions two disulfide bonds are formed involving the reactive cysteines. Under reducing conditions zinc is bound to the reactive cysteines and the protein is inactive.

It localises to the cytoplasm. Its function is as follows. Redox regulated molecular chaperone. Protects both thermally unfolding and oxidatively damaged proteins from irreversible aggregation. Plays an important role in the bacterial defense system toward oxidative stress. The sequence is that of 33 kDa chaperonin from Desulfotalea psychrophila (strain LSv54 / DSM 12343).